The following is a 132-amino-acid chain: Large ribosomal subunit protein uL14 (132 aa).

Belongs to the universal ribosomal protein uL14 family. As to quaternary structure, part of the 50S ribosomal subunit. Forms a cluster with proteins L3 and L24e, part of which may contact the 16S rRNA in 2 intersubunit bridges.

Its function is as follows. Binds to 23S rRNA. Forms part of two intersubunit bridges in the 70S ribosome. This is Large ribosomal subunit protein uL14 from Archaeoglobus fulgidus (strain ATCC 49558 / DSM 4304 / JCM 9628 / NBRC 100126 / VC-16).